Consider the following 496-residue polypeptide: Membrane-bound lytic murein transglycosylase F (496 aa).

Residues 1-31 (MPIFSTRVLTYLRCIFRLFIGLMLLLTLVGC) form the signal peptide. The segment at 32–271 (DFYTPSSQLE…KLDEKYFGHV (240 aa)) is non-LT domain. Residues 273-496 (NFDFVDTRTF…AEVVKQITLR (224 aa)) are LT domain. Residue Glu-316 is part of the active site. Positions 464-485 (HRREELDEDDSSEPQSTERPTV) are disordered.

This sequence in the N-terminal section; belongs to the bacterial solute-binding protein 3 family. The protein in the C-terminal section; belongs to the transglycosylase Slt family.

The protein resides in the cell outer membrane. The catalysed reaction is Exolytic cleavage of the (1-&gt;4)-beta-glycosidic linkage between N-acetylmuramic acid (MurNAc) and N-acetylglucosamine (GlcNAc) residues in peptidoglycan, from either the reducing or the non-reducing ends of the peptidoglycan chains, with concomitant formation of a 1,6-anhydrobond in the MurNAc residue.. Murein-degrading enzyme that degrades murein glycan strands and insoluble, high-molecular weight murein sacculi, with the concomitant formation of a 1,6-anhydromuramoyl product. Lytic transglycosylases (LTs) play an integral role in the metabolism of the peptidoglycan (PG) sacculus. Their lytic action creates space within the PG sacculus to allow for its expansion as well as for the insertion of various structures such as secretion systems and flagella. The sequence is that of Membrane-bound lytic murein transglycosylase F from Aeromonas salmonicida (strain A449).